The primary structure comprises 193 residues: Rho-related GTP-binding protein RhoA-B (193 aa).

GTP-binding positions include 12-19 (GDGACGKT), 30-37 (FPEVYVPT), 59-63 (DTAGQ), 117-120 (NKKD), and 160-162 (SAK). Tyrosine 34 is a glycosylation site ((Microbial infection) O-linked (GlcNAc) tyrosine; by Yersinia Afp18). Position 190 is a cysteine methyl ester (cysteine 190). Cysteine 190 carries the S-geranylgeranyl cysteine lipid modification. A propeptide spans 191-193 (CLL) (removed in mature form).

It belongs to the small GTPase superfamily. Rho family. Post-translationally, (Microbial infection) Glycosylated at Tyr-34 by Yersinia ruckeri toxin Afp18. Mono-O-GlcNAcylation by Afp18 inhibits RhoA activation by guanine nucleotide exchange factors and blocks RhoA signaling.

The protein localises to the cell membrane. Functionally, regulates a signal transduction pathway linking plasma membrane receptors to the assembly of focal adhesions and actin stress fibers. The chain is Rho-related GTP-binding protein RhoA-B from Danio rerio (Zebrafish).